A 116-amino-acid chain; its full sequence is Cysteine-rich venom protein Cau1 (116 aa).

An SCP domain is found at Ser-4 to Tyr-42. Disulfide bonds link Cys-24-Cys-40, Cys-62-Cys-69, Cys-65-Cys-74, Cys-87-Cys-105, and Cys-96-Cys-109. The ShKT domain occupies Cys-78–Cys-111.

The protein belongs to the CRISP family. In terms of tissue distribution, expressed by the venom gland.

It is found in the secreted. Its function is as follows. Blocks contraction of smooth muscle elicited by high potassium-induced depolarization, but does not block caffeine-stimulated contraction. May target voltage-gated calcium channels on smooth muscle. The protein is Cysteine-rich venom protein Cau1 of Causus rhombeatus (Rhombic night adder).